The following is a 388-amino-acid chain: Phosphopentomutase (388 aa).

Residues aspartate 9, aspartate 283, histidine 288, aspartate 324, histidine 325, and histidine 336 each contribute to the Mn(2+) site.

This sequence belongs to the phosphopentomutase family. It depends on Mn(2+) as a cofactor.

The protein resides in the cytoplasm. The enzyme catalyses 2-deoxy-alpha-D-ribose 1-phosphate = 2-deoxy-D-ribose 5-phosphate. It catalyses the reaction alpha-D-ribose 1-phosphate = D-ribose 5-phosphate. It functions in the pathway carbohydrate degradation; 2-deoxy-D-ribose 1-phosphate degradation; D-glyceraldehyde 3-phosphate and acetaldehyde from 2-deoxy-alpha-D-ribose 1-phosphate: step 1/2. In terms of biological role, isomerase that catalyzes the conversion of deoxy-ribose 1-phosphate (dRib-1-P) and ribose 1-phosphate (Rib-1-P) to deoxy-ribose 5-phosphate (dRib-5-P) and ribose 5-phosphate (Rib-5-P), respectively. The polypeptide is Phosphopentomutase (Deinococcus radiodurans (strain ATCC 13939 / DSM 20539 / JCM 16871 / CCUG 27074 / LMG 4051 / NBRC 15346 / NCIMB 9279 / VKM B-1422 / R1)).